The primary structure comprises 197 residues: Probable nicotinate-nucleotide adenylyltransferase (197 aa).

It belongs to the NadD family.

It catalyses the reaction nicotinate beta-D-ribonucleotide + ATP + H(+) = deamido-NAD(+) + diphosphate. It participates in cofactor biosynthesis; NAD(+) biosynthesis; deamido-NAD(+) from nicotinate D-ribonucleotide: step 1/1. In terms of biological role, catalyzes the reversible adenylation of nicotinate mononucleotide (NaMN) to nicotinic acid adenine dinucleotide (NaAD). This is Probable nicotinate-nucleotide adenylyltransferase from Chlorobium phaeobacteroides (strain DSM 266 / SMG 266 / 2430).